Reading from the N-terminus, the 424-residue chain is Putative fasciclin-like arabinogalactan protein 20 (424 aa).

Residues 46–66 (LLTTFFLIFFVLDIDLVATSM) form a helical membrane-spanning segment. Residues 56–194 (VLDIDLVATS…YVVIYGSDEF (139 aa)) enclose the FAS1 1 domain. Residues N153 and N160 are each glycosylated (N-linked (GlcNAc...) asparagine). A compositionally biased stretch (low complexity) spans 199 to 226 (TKISDDSSSSSSIPSTTSSTGSIPIPSS). Residues 199–246 (TKISDDSSSSSSIPSTTSSTGSIPIPSSATQTPPSPNIASDSTRNLPN) form a disordered region. Over residues 227 to 246 (ATQTPPSPNIASDSTRNLPN) the composition is skewed to polar residues. N-linked (GlcNAc...) asparagine glycans are attached at residues N246, N283, and N287. In terms of domain architecture, FAS1 2 spans 250–384 (PVNRFNIFES…IAVHGFNQMI (135 aa)). The interval 405–424 (QEEEGVHGEYSSELGDYGLH) is disordered.

It belongs to the fasciclin-like AGP family.

It localises to the membrane. Functionally, may be a cell surface adhesion protein. This is Putative fasciclin-like arabinogalactan protein 20 (FLA20) from Arabidopsis thaliana (Mouse-ear cress).